A 71-amino-acid chain; its full sequence is uncharacterized protein (71 aa).

This is an uncharacterized protein from Lepidoptera (butterflies and moths).